Here is a 140-residue protein sequence, read N- to C-terminus: Putative pre-16S rRNA nuclease (140 aa).

The protein belongs to the YqgF nuclease family.

The protein localises to the cytoplasm. Could be a nuclease involved in processing of the 5'-end of pre-16S rRNA. The polypeptide is Putative pre-16S rRNA nuclease (Yersinia pseudotuberculosis serotype IB (strain PB1/+)).